The following is a 654-amino-acid chain: Tetratricopeptide repeat protein 30 homolog (654 aa).

TPR repeat units follow at residues 10–43 (DGEY…STTR), 44–76 (AGLS…VPDV), 145–178 (ASTK…GGFN), 180–212 (HVAY…GIRN), 393–426 (CRSA…RAWI), 452–485 (SWRL…NYDD), and 535–568 (CIVN…GSGA).

Belongs to the TTC30/dfy-1/fleer family.

The protein resides in the cell projection. Its subcellular location is the cilium. Functionally, required for polyglutamylation of axonemal tubulin in sensory cilia. Plays a role in anterograde intraflagellar transport (IFT), the process by which cilia precursors are transported from the base of the cilium to the site of their incorporation at the tip. The sequence is that of Tetratricopeptide repeat protein 30 homolog from Anopheles gambiae (African malaria mosquito).